Here is a 989-residue protein sequence, read N- to C-terminus: MLEKSKSRKENDRKDRDRSKKENGRRDTTEMRSRVKRCDSEEEERIRIRRDRKSSDFEEEEYERDSKRRGEDKGRGRRERDRDRGKYLKRDRERREREKEKGRKKQKKERSREDCNEESDDVKCGLKRKRTERSRHGDDDVEKKTRDEQVEDEQKQLAEEVEKRRRRVQEWQELKRQNEEAQIESKGPETGKAWTLDGESDDEVKSDSEMDVDRDTKLENGGDAKMVASENETAVTVSENGGDRAADEDEIDPLDAFMNTMVLPEVEKLSNIVIDGILDFKMNGKETGDQAKKGFNKAALGRIIQGEDSDSDYSEPKSDDDPSLDEDDEEFMKRVKKTKAEKLSLVDHSKIEYEPFRKNFYIEVKDISRMTQDAVNAYRKELELKVHGKDVPRPIQFWHQTGLTSKILDTLKKLNYEKPMPIQAQALPIIMSGRDCIGVAKTGSGKTLGFVLPMLRHIKDQPPVEAGDGPIGLVMAPTRELVQQIYSDIRKFSKALGIICVPVYGGSGVAQQISELKRGTEIVVCTPGRMIDILCTSSGKITNLRRVTYLVMDEADRMFDMGFEPQITRIVQNIRPDRQTVLFSATFPRQVETLARKVLNKPVEIQVGGRSVVNKDITQLVEIRPESERFSRLLELLGEWYEKGKVLVFVRSQEKSISDFKSDVCNLLIATSVAARGLDVKELELVVNFDAPNHYEDYVHRVGRTGRAGRKGCAVTFISEDDAKYAPDLVKALELSEQPVPDDVKAVAEGFMAKVKQGIEQAHGTGYGGSGFKFNEEEDEVRKAAKKAQAKEYGFEEEKSDSEDENDVVRKAGGDISQQQITLAQIAAIASAASKAPVTANQLLPNGGGLATEPGIPPTDGAGRVAAMIAAANVQQYLAKIQADAIPEHYEAELEINDFPQNARWKVTHKETLGPISEWSGASITTRGKFYEAGRIPGPEERKLYLFVEGPTEISVKTAKAELKRVLEDITNQTFSLPGGAQSGRYSVL.

Basic and acidic residues-rich tracts occupy residues 1–39 (MLEK…KRCD) and 64–101 (RDSK…EKEK). 2 disordered regions span residues 1–248 (MLEK…AADE) and 305–330 (QGED…DDEE). Positions 88-182 (LKRDRERRER…ELKRQNEEAQ (95 aa)) form a coiled coil. Ser-119 is modified (phosphoserine). Basic and acidic residues predominate over residues 134–179 (SRHGDDDVEKKTRDEQVEDEQKQLAEEVEKRRRRVQEWQELKRQNE). Ser-200 carries the post-translational modification Phosphoserine. Over residues 203–222 (EVKSDSEMDVDRDTKLENGG) the composition is skewed to basic and acidic residues. Polar residues predominate over residues 230-239 (ENETAVTVSE). The span at 321-330 (DPSLDEDDEE) shows a compositional bias: acidic residues. Residues 396–424 (QFWHQTGLTSKILDTLKKLNYEKPMPIQA) carry the Q motif motif. Residues 427–605 (LPIIMSGRDC…RKVLNKPVEI (179 aa)) form the Helicase ATP-binding domain. 440-447 (AKTGSGKT) is an ATP binding site. The short motif at 553-556 (DEAD) is the DEAD box element. In terms of domain architecture, Helicase C-terminal spans 590 to 748 (QVETLARKVL…PVPDDVKAVA (159 aa)).

This sequence belongs to the DEAD box helicase family. DDX46/PRP5 subfamily.

It carries out the reaction ATP + H2O = ADP + phosphate + H(+). This is DEAD-box ATP-dependent RNA helicase 45 (RH45) from Arabidopsis thaliana (Mouse-ear cress).